A 512-amino-acid polypeptide reads, in one-letter code: Cytochrome P450 82C3 (512 aa).

A helical membrane pass occupies residues 1–21 (MDTSLFSLFVSILVFVFIALF). Cysteine 451 lines the heme pocket.

This sequence belongs to the cytochrome P450 family. Requires heme as cofactor.

The protein localises to the membrane. This Arabidopsis thaliana (Mouse-ear cress) protein is Cytochrome P450 82C3 (CYP82C3).